The chain runs to 157 residues: uncharacterized protein (157 aa).

This is an uncharacterized protein from Acidianus hospitalis (AFV-1).